Consider the following 135-residue polypeptide: MLSPKRTRFRKQHRGRMKGISSRGNRICFGRYALQALEPAWITSRQIEAGRRAMTRYARRGGKIWVRIFPDKPVTVRPTETRMGSGKGSPEYWVSVVKPGRILYEMGGISETVARAAIEIAASKMPIRTQFVIAG.

It belongs to the universal ribosomal protein uL16 family. As to quaternary structure, part of the 50S ribosomal subunit.

It is found in the plastid. Its subcellular location is the chloroplast. The chain is Large ribosomal subunit protein uL16c from Ceratophyllum demersum (Rigid hornwort).